The chain runs to 305 residues: Glutaminase (305 aa).

Substrate contacts are provided by Ser61, Asn113, Glu158, Asn165, Tyr189, Tyr241, and Val259.

The protein belongs to the glutaminase family. Homotetramer.

It carries out the reaction L-glutamine + H2O = L-glutamate + NH4(+). This Clostridium botulinum (strain Kyoto / Type A2) protein is Glutaminase.